A 101-amino-acid polypeptide reads, in one-letter code: MAKVSAVEKNKRRKMMVMRYAARRARLKAIVMDQKISLEERFKASVQLAELPRNSAKVRVRNRCEVSGRPRAYYRKLKMSRIALRELGSVGYIPGIIKSSW.

Belongs to the universal ribosomal protein uS14 family. As to quaternary structure, part of the 30S ribosomal subunit. Contacts proteins S3 and S10.

In terms of biological role, binds 16S rRNA, required for the assembly of 30S particles and may also be responsible for determining the conformation of the 16S rRNA at the A site. The chain is Small ribosomal subunit protein uS14 from Bartonella quintana (strain Toulouse) (Rochalimaea quintana).